Here is a 459-residue protein sequence, read N- to C-terminus: UDP-N-acetylglucosamine 1-carboxyvinyltransferase (459 aa).

Position 40–41 (40–41 (KN)) interacts with phosphoenolpyruvate. Arginine 111 serves as a coordination point for UDP-N-acetyl-alpha-D-glucosamine. Cysteine 135 (proton donor) is an active-site residue. Cysteine 135 is modified (2-(S-cysteinyl)pyruvic acid O-phosphothioketal). Residues 140 to 144 (RPVDL), aspartate 324, and valine 346 contribute to the UDP-N-acetyl-alpha-D-glucosamine site. Positions 437–459 (PSAPPSEVSSAVAAGPDAAAAPV) are disordered. A compositionally biased stretch (low complexity) spans 441–459 (PSEVSSAVAAGPDAAAAPV).

This sequence belongs to the EPSP synthase family. MurA subfamily.

Its subcellular location is the cytoplasm. It catalyses the reaction phosphoenolpyruvate + UDP-N-acetyl-alpha-D-glucosamine = UDP-N-acetyl-3-O-(1-carboxyvinyl)-alpha-D-glucosamine + phosphate. It functions in the pathway cell wall biogenesis; peptidoglycan biosynthesis. Its function is as follows. Cell wall formation. Adds enolpyruvyl to UDP-N-acetylglucosamine. In Gloeobacter violaceus (strain ATCC 29082 / PCC 7421), this protein is UDP-N-acetylglucosamine 1-carboxyvinyltransferase.